The following is a 1020-amino-acid chain: MGRGAGREYSPAATTAENGGGKKKQKEKELDELKKEVAMDDHKLSLDELGRKYQVDLSKGLTNQRAQDILARDGPNALTPPPTTPEWVKFCRQLFGGFSILLWIGAILCFLAYGIQAAMEDEPSNDNLYLGVVLAAVVIVTGCFSYYQEAKSSKIMDSFKNMVPQQALVVREGEKMQINAEEVVVGDLVEVKGGDRVPADLRIISSHGCKVDNSSLTGESEPQTRSPEFTHENPLETRNICFFSTNCVEGTARGIVIATGDRTVMGRIATLASGLEVGRTPIAMEIEHFIQLITGVAVFLGVSFFVLSLILGYSWLEAVIFLIGIIVANVPEGLLATVTVCLTLTAKRMARKNCLVKNLEAVETLGSTSTICSDKTGTLTQNRMTVAHMWFDNQIHEADTTEDQSGATFDKRSPTWTALSRIAGLCNRAVFKAGQENISVSKRDTAGDASESALLKCIELSCGSVRKMRDRNPKVAEIPFNSTNKYQLSIHEREDNPQSHVLVMKGAPERILDRCSSILVQGKEIPLDKEMQDAFQNAYLELGGLGERVLGFCQLNLPSGKFPRGFKFDTDELNFPTEKLCFVGLMSMIDPPRAAVPDAVGKCRSAGIKVIMVTGDHPITAKAIAKGVGIISEGNETVEDIAARLNIPVSQVNPREAKACVVHGSDLKDMTSEQLDEILKNHTEIVFARTSPQQKLIIVEGCQRQGAIVAVTGDGVNDSPALKKADIGIAMGIAGSDVSKQAADMILLDDNFASIVTGVEEGRLIFDNLKKSIAYTLTSNIPEITPFLLFIIANIPLPLGTVTILCIDLGTDMVPAISLAYEAAESDIMKRQPRNPQTDKLVNERLISMAYGQIGMIQALGGFFTYFVILAENGFLPSRLLGIRLDWDDRSMNDLEDSYGQEWTYEQRKVVEFTCHTAFFASIVVVQWADLIICKTRRNSVFQQGMKNKILIFGLLEETALAAFLSYCPGMGVALRMYPLKVTWWFCAFPYSLLIFIYDEVRKLILRRYPGGWVEKETYY.

The propeptide occupies 1–5 (MGRGA). The interval 1-31 (MGRGAGREYSPAATTAENGGGKKKQKEKELD) is disordered. The Cytoplasmic portion of the chain corresponds to 6–85 (GREYSPAATT…NALTPPPTTP (80 aa)). Ser10 carries the post-translational modification Phosphoserine. Residues 80–82 (PPP) form an interaction with phosphoinositide-3 kinase region. The chain crosses the membrane as a helical span at residues 86 to 106 (EWVKFCRQLFGGFSILLWIGA). Residues 107–129 (ILCFLAYGIQAAMEDEPSNDNLY) lie on the Extracellular side of the membrane. A helical transmembrane segment spans residues 130–150 (LGVVLAAVVIVTGCFSYYQEA). Topologically, residues 151–286 (KSSKIMDSFK…VGRTPIAMEI (136 aa)) are cytoplasmic. The span at 212–227 (DNSSLTGESEPQTRSP) shows a compositional bias: polar residues. Residues 212–231 (DNSSLTGESEPQTRSPEFTH) are disordered. Residues 287-306 (EHFIQLITGVAVFLGVSFFV) traverse the membrane as a helical segment. Topologically, residues 307–318 (LSLILGYSWLEA) are extracellular. The chain crosses the membrane as a helical span at residues 319–336 (VIFLIGIIVANVPEGLLA). Topologically, residues 337 to 769 (TVTVCLTLTA…EEGRLIFDNL (433 aa)) are cytoplasmic. The 4-aspartylphosphate intermediate role is filled by Asp374. Phosphoserine is present on residues Ser439, Ser450, and Ser559. The residue at position 570 (Thr570) is a Phosphothreonine. Ser587 and Ser672 each carry phosphoserine. The Mg(2+) site is built by Asp714 and Asp718. A helical transmembrane segment spans residues 770 to 789 (KKSIAYTLTSNIPEITPFLL). The Extracellular portion of the chain corresponds to 790 to 799 (FIIANIPLPL). A helical transmembrane segment spans residues 800–820 (GTVTILCIDLGTDMVPAISLA). Residues 821 to 840 (YEAAESDIMKRQPRNPQTDK) lie on the Cytoplasmic side of the membrane. Residue Ser826 is modified to Phosphoserine. The chain crosses the membrane as a helical span at residues 841 to 863 (LVNERLISMAYGQIGMIQALGGF). Residues 864 to 915 (FTYFVILAENGFLPSRLLGIRLDWDDRSMNDLEDSYGQEWTYEQRKVVEFTC) lie on the Extracellular side of the membrane. Residues 916–935 (HTAFFASIVVVQWADLIICK) traverse the membrane as a helical segment. Residues 936–948 (TRRNSVFQQGMKN) are Cytoplasmic-facing. At Ser940 the chain carries Phosphoserine; by PKA. Residues 949–967 (KILIFGLLEETALAAFLSY) form a helical membrane-spanning segment. The Extracellular segment spans residues 968–982 (CPGMGVALRMYPLKV). Residues 983–1003 (TWWFCAFPYSLLIFIYDEVRK) form a helical membrane-spanning segment. Topologically, residues 1004 to 1020 (LILRRYPGGWVEKETYY) are cytoplasmic.

It belongs to the cation transport ATPase (P-type) (TC 3.A.3) family. Type IIC subfamily. In terms of assembly, the sodium/potassium-transporting ATPase is composed of a catalytic alpha subunit, an auxiliary non-catalytic beta subunit and an additional regulatory subunit. Interacts with regulatory subunit FXYD1.

Its subcellular location is the membrane. It is found in the cell membrane. The enzyme catalyses K(+)(out) + Na(+)(in) + ATP + H2O = K(+)(in) + Na(+)(out) + ADP + phosphate + H(+). In terms of biological role, this is the catalytic component of the active enzyme, which catalyzes the hydrolysis of ATP coupled with the exchange of sodium and potassium ions across the plasma membrane. This action creates the electrochemical gradient of sodium and potassium, providing the energy for active transport of various nutrients. The polypeptide is Sodium/potassium-transporting ATPase subunit alpha-2 (ATP1A2) (Sus scrofa (Pig)).